The primary structure comprises 152 residues: Serglycin (152 aa).

The signal sequence occupies residues 1-25; it reads MQVPVGSRLVLALAFVLVWGSSVQG. A propeptide spans 26–74 (activation peptide); it reads YPARRARYQWVRCKPNGFFANCIEEKGPQFDLIDESNNIGPPMNNPVLM. C38 and C47 are disulfide-bonded. The disordered stretch occupies residues 66–115; sequence PPMNNPVLMEGPSKDFISNYDDYGSGSGSGSGSGSGSGSGSGSGFLGDME. A run of 10 repeats spans residues 89–90, 91–92, 93–94, 95–96, 97–98, 99–100, 101–102, 103–104, 105–106, and 107–108. Positions 89–108 are 10 X 2 AA tandem repeats of G-S; the sequence is GSGSGSGSGSGSGSGSGSGS. Positions 90-110 are enriched in gly residues; that stretch reads SGSGSGSGSGSGSGSGSGSGF. O-linked (Xyl...) (glycosaminoglycan) serine glycans are attached at residues S92 and S94. O-linked (Xyl...) (glycosaminoglycan) serine glycans are attached at residues S98, S100, S102, S104, S106, and S108.

It belongs to the serglycin family. As to quaternary structure, binds to activated CD44 and to GZMB. Post-translationally, O-glycosylated; contains chondroitin sulfate and heparan sulfate.

The protein resides in the cytoplasmic granule. It localises to the cytolytic granule. The protein localises to the secreted. Its subcellular location is the extracellular space. It is found in the golgi apparatus. Its function is as follows. Plays a role in formation of mast cell secretory granules and mediates storage of various compounds in secretory vesicles. Required for storage of some proteases in both connective tissue and mucosal mast cells and for storage of granzyme B in T-lymphocytes. Plays a role in localizing neutrophil elastase in azurophil granules of neutrophils. Mediates processing of MMP2. Plays a role in cytotoxic cell granule-mediated apoptosis by forming a complex with granzyme B which is delivered to cells by perforin to induce apoptosis. Regulates the secretion of TNF-alpha and may also regulate protease secretion. Inhibits bone mineralization. In Mus musculus (Mouse), this protein is Serglycin (Srgn).